The primary structure comprises 274 residues: MTKLIIHLVSDSSVQTAKYAANSALAQFTSVKPKLYHWPMIRNLELLNEVLSKIEYKHGIVLYTIADQELRKTLTKFCYELKIPCISVIGKIIKEMSVFSGIEIEKEQNYNNYKFDKTYFDTLNAIDYAIRHDDGQMLNELSEADIILIGPSRTSKTPTSVFLAYNGLKAANIPYVYNCPFPDFIEKDIDQLVVGLVINPNRLIEIREARLNLLQINENKSYTDFNIVQKECLEVRKICDQRNWPVIDVSTRSIEETAALIMRIYYNRKNKYNK.

ADP is bound at residue 150–157; that stretch reads GPSRTSKT.

Belongs to the pyruvate, phosphate/water dikinase regulatory protein family. PDRP subfamily.

It catalyses the reaction N(tele)-phospho-L-histidyl/L-threonyl-[pyruvate, phosphate dikinase] + ADP = N(tele)-phospho-L-histidyl/O-phospho-L-threonyl-[pyruvate, phosphate dikinase] + AMP + H(+). It carries out the reaction N(tele)-phospho-L-histidyl/O-phospho-L-threonyl-[pyruvate, phosphate dikinase] + phosphate + H(+) = N(tele)-phospho-L-histidyl/L-threonyl-[pyruvate, phosphate dikinase] + diphosphate. Its function is as follows. Bifunctional serine/threonine kinase and phosphorylase involved in the regulation of the pyruvate, phosphate dikinase (PPDK) by catalyzing its phosphorylation/dephosphorylation. The polypeptide is Putative pyruvate, phosphate dikinase regulatory protein (Rickettsia peacockii (strain Rustic)).